Here is a 203-residue protein sequence, read N- to C-terminus: MKGKLIVLEGIDGSGKSSIGMMLTDILNNIGIKSIYTFEPTHAYYGSKLRESMLSKDLTPEEELSLFIADRKEHIKHMIRPAINDGYVIVLDRYMHSSIAYQGAKGIDKEYIYNLHKDFILEPDLVFILHLNIETALNRIMEKRGFVDRFENKHYLEEVDKIFSSFNEPYMHHIDASKDQKSICDEILNTIKESKILPLDSLQ.

10–17 contacts ATP; it reads GIDGSGKS.

Belongs to the thymidylate kinase family.

It carries out the reaction dTMP + ATP = dTDP + ADP. Its function is as follows. Phosphorylation of dTMP to form dTDP in both de novo and salvage pathways of dTTP synthesis. This Brachyspira hyodysenteriae (strain ATCC 49526 / WA1) protein is Thymidylate kinase.